The sequence spans 837 residues: Probable aldehyde oxidase 4 (837 aa).

A 2Fe-2S ferredoxin-type domain is found at 9–98 (ERVVFELNGE…FCSIITTEGL (90 aa)). The [2Fe-2S] cluster site is built by C50, C55, C58, and C80. Residues 240–427 (ISGPREGWYC…LSIFIPHWAS (188 aa)) enclose the FAD-binding PCMH-type domain.

The protein belongs to the xanthine dehydrogenase family. Aldehyde oxidases (AO) are homodimers and heterodimers of AO subunits. The cofactor is [2Fe-2S] cluster. It depends on FAD as a cofactor. Requires Mo-molybdopterin as cofactor.

It catalyses the reaction an aldehyde + O2 + H2O = a carboxylate + H2O2 + H(+). The chain is Probable aldehyde oxidase 4 from Oryza sativa subsp. japonica (Rice).